We begin with the raw amino-acid sequence, 1051 residues long: DNA-directed RNA polymerase subunit beta (1051 aa).

Belongs to the RNA polymerase beta chain family. In terms of assembly, in plastids the minimal PEP RNA polymerase catalytic core is composed of four subunits: alpha, beta, beta', and beta''. When a (nuclear-encoded) sigma factor is associated with the core the holoenzyme is formed, which can initiate transcription (Potential).

Its subcellular location is the plastid. The protein resides in the apicoplast. It catalyses the reaction RNA(n) + a ribonucleoside 5'-triphosphate = RNA(n+1) + diphosphate. DNA-dependent RNA polymerase catalyzes the transcription of DNA into RNA using the four ribonucleoside triphosphates as substrates. The chain is DNA-directed RNA polymerase subunit beta (rpoB) from Toxoplasma gondii.